A 263-amino-acid polypeptide reads, in one-letter code: MRIQVENLWVAFKNKVALREVYLDLFGDGAQVVALIGPSGAGKSTFLRLLKGMVKLSGGKVWVDSLPLHEGQRDALQQLRRRTAMVYQTFQLIGRLTVLENVLVGRLPHMSPIRGLFKHFSVQDLAKAEKLLEEVGLLEHAWQRADALSGGQQQRVGIARALIQEPALILADEPISALDPKNAKVIMELLLGAVRRQGIPLLVTLHHLEMVRHYADRVVAFKEGQVFFNGPLSDFTSEKEKELYFGEKETHEASEWFSSTLMV.

Residues Ile3–Lys248 enclose the ABC transporter domain. An ATP-binding site is contributed by Gly37–Ser44.

It belongs to the ABC transporter superfamily. Phosphonates importer (TC 3.A.1.9.1) family. In terms of assembly, the complex is composed of two ATP-binding proteins (PhnC), two transmembrane proteins (PhnE) and a solute-binding protein (PhnD).

Its subcellular location is the cell inner membrane. It carries out the reaction phosphonate(out) + ATP + H2O = phosphonate(in) + ADP + phosphate + H(+). Its function is as follows. Part of the ABC transporter complex PhnCDE involved in phosphonates import. Responsible for energy coupling to the transport system. The sequence is that of Phosphonates import ATP-binding protein PhnC 1 from Synechococcus sp. (strain JA-2-3B'a(2-13)) (Cyanobacteria bacterium Yellowstone B-Prime).